The chain runs to 807 residues: G-type lectin S-receptor-like serine/threonine-protein kinase At1g61420 (807 aa).

An N-terminal signal peptide occupies residues 1–24 (MGKKWIVFFAYLLLSSFFISSSSA). The Bulb-type lectin domain occupies 25–144 (GITKESPLPI…FSGRTLWQSF (120 aa)). The Extracellular portion of the chain corresponds to 25–426 (GITKESPLPI…ELGGNKRKKA (402 aa)). 6 N-linked (GlcNAc...) asparagine glycosylation sites follow: asparagine 53, asparagine 94, asparagine 117, asparagine 134, asparagine 236, and asparagine 267. The EGF-like; atypical domain occupies 278–314 (PEHSCDYYGVCGPFGLCVKSVPPKCTCFKGFVPKLIE). 2 disulfides stabilise this stretch: cysteine 282–cysteine 294 and cysteine 288–cysteine 302. Asparagine 320, asparagine 336, and asparagine 375 each carry an N-linked (GlcNAc...) asparagine glycan. One can recognise a PAN domain in the interval 333–413 (CQGNSTGKYA…EGGELLSIRL (81 aa)). 2 cysteine pairs are disulfide-bonded: cysteine 368–cysteine 389 and cysteine 372–cysteine 378. A helical transmembrane segment spans residues 427–447 (ITASIVSLSLVVIIAFVAFCF). At 448–807 (WRYRVKHNAD…EMTKSVILGR (360 aa)) the chain is on the cytoplasmic side. One can recognise a Protein kinase domain in the interval 494-779 (FSISNKLGQG…DLPPPEQPTF (286 aa)). ATP-binding positions include 500–508 (LGQGGFGPV) and lysine 522. Serine 528 and serine 543 each carry phosphoserine. The tract at residues 583–600 (RKRLEIDWPKRLDIIQGI) is caM-binding. Aspartate 619 serves as the catalytic Proton acceptor. Serine 623 and serine 636 each carry phosphoserine. Threonine 653 carries the phosphothreonine modification. Phosphoserine is present on residues serine 696 and serine 790.

The protein belongs to the protein kinase superfamily. Ser/Thr protein kinase family.

The protein localises to the cell membrane. The enzyme catalyses L-seryl-[protein] + ATP = O-phospho-L-seryl-[protein] + ADP + H(+). The catalysed reaction is L-threonyl-[protein] + ATP = O-phospho-L-threonyl-[protein] + ADP + H(+). The protein is G-type lectin S-receptor-like serine/threonine-protein kinase At1g61420 of Arabidopsis thaliana (Mouse-ear cress).